The primary structure comprises 275 residues: Tryptophan synthase alpha chain (275 aa).

The active-site Proton acceptor is Glu-51.

The protein belongs to the TrpA family. As to quaternary structure, tetramer of two alpha and two beta chains.

The catalysed reaction is (1S,2R)-1-C-(indol-3-yl)glycerol 3-phosphate + L-serine = D-glyceraldehyde 3-phosphate + L-tryptophan + H2O. Its pathway is amino-acid biosynthesis; L-tryptophan biosynthesis; L-tryptophan from chorismate: step 5/5. Functionally, the alpha subunit is responsible for the aldol cleavage of indoleglycerol phosphate to indole and glyceraldehyde 3-phosphate. The chain is Tryptophan synthase alpha chain from Caulobacter vibrioides (strain ATCC 19089 / CIP 103742 / CB 15) (Caulobacter crescentus).